A 241-amino-acid polypeptide reads, in one-letter code: Putative inactive serine protease 58 (241 aa).

The N-terminal stretch at 1–17 (MKLAFLCILSTLLRTFA) is a signal peptide. One can recognise a Peptidase S1 domain in the interval 18-239 (YNPDHIAGTT…YLPWIEDTMK (222 aa)). Cys41 and Cys57 form a disulfide bridge. Catalysis depends on charge relay system residues His56 and Asp101. 3 disulfide bridges follow: Cys133–Cys201, Cys165–Cys180, and Cys191–Cys215. Residue Asn156 is glycosylated (N-linked (GlcNAc...) asparagine).

The protein belongs to the peptidase S1 family.

It is found in the secreted. It carries out the reaction Preferential cleavage: Arg-|-Xaa, Lys-|-Xaa.. In Mus musculus (Mouse), this protein is Putative inactive serine protease 58 (Prss58).